A 674-amino-acid polypeptide reads, in one-letter code: DNA ligase (674 aa).

Residues 34 to 38, 84 to 85, and Glu-116 each bind NAD(+); these read DAEYD and SL. Lys-118 functions as the N6-AMP-lysine intermediate in the catalytic mechanism. Arg-139, Glu-174, Lys-291, and Lys-315 together coordinate NAD(+). Residues Cys-409, Cys-412, Cys-425, and Cys-430 each contribute to the Zn(2+) site. A BRCT domain is found at 586–674; it reads RGEEALKGLT…TGKPVETLAS (89 aa).

The protein belongs to the NAD-dependent DNA ligase family. LigA subfamily. Mg(2+) is required as a cofactor. Requires Mn(2+) as cofactor.

The catalysed reaction is NAD(+) + (deoxyribonucleotide)n-3'-hydroxyl + 5'-phospho-(deoxyribonucleotide)m = (deoxyribonucleotide)n+m + AMP + beta-nicotinamide D-nucleotide.. DNA ligase that catalyzes the formation of phosphodiester linkages between 5'-phosphoryl and 3'-hydroxyl groups in double-stranded DNA using NAD as a coenzyme and as the energy source for the reaction. It is essential for DNA replication and repair of damaged DNA. In Thermus scotoductus, this protein is DNA ligase.